A 54-amino-acid chain; its full sequence is Califin-C (54 aa).

Residues Cys25 and Cys53 are joined by a disulfide bond. Leu36 bears the Leucine amide mark.

The protein belongs to the molluscan ELH family. As to quaternary structure, this protein consists of a large 36-residue subunit, bound by a single disulfide-bond to a small 18-residue subunit.

Its subcellular location is the secreted. Its function is as follows. Injected in sexually mature animals califin C excites LB and LC cells of the abdominal ganglion and cause egg-laying. The chain is Califin-C from Aplysia californica (California sea hare).